Reading from the N-terminus, the 188-residue chain is Large ribosomal subunit protein eL18 (188 aa).

The interval 151–188 is disordered; it reads HFGPAPGVPHSHTKPLVRSKGRKFERARGRRKSCGYKK. 2 stretches are compositionally biased toward basic residues: residues 161 to 171 and 178 to 188; these read SHTKPLVRSKG and RGRRKSCGYKK.

This sequence belongs to the eukaryotic ribosomal protein eL18 family.

The protein localises to the cytoplasm. This chain is Large ribosomal subunit protein eL18 (RpL18), found in Lysiphlebus testaceipes (Greenbugs aphid parastoid).